The chain runs to 167 residues: 2-C-methyl-D-erythritol 2,4-cyclodiphosphate synthase (167 aa).

Positions 8 and 10 each coordinate a divalent metal cation. Residues 8–10 and 34–35 each bind 4-CDP-2-C-methyl-D-erythritol 2-phosphate; these read DIH and HS. Histidine 42 lines the a divalent metal cation pocket. Residues 56-58 and arginine 142 each bind 4-CDP-2-C-methyl-D-erythritol 2-phosphate; that span reads DIG.

Belongs to the IspF family. In terms of assembly, homotrimer. It depends on a divalent metal cation as a cofactor.

It carries out the reaction 4-CDP-2-C-methyl-D-erythritol 2-phosphate = 2-C-methyl-D-erythritol 2,4-cyclic diphosphate + CMP. It functions in the pathway isoprenoid biosynthesis; isopentenyl diphosphate biosynthesis via DXP pathway; isopentenyl diphosphate from 1-deoxy-D-xylulose 5-phosphate: step 4/6. Its function is as follows. Involved in the biosynthesis of isopentenyl diphosphate (IPP) and dimethylallyl diphosphate (DMAPP), two major building blocks of isoprenoid compounds. Catalyzes the conversion of 4-diphosphocytidyl-2-C-methyl-D-erythritol 2-phosphate (CDP-ME2P) to 2-C-methyl-D-erythritol 2,4-cyclodiphosphate (ME-CPP) with a corresponding release of cytidine 5-monophosphate (CMP). This Buchnera aphidicola subsp. Schizaphis graminum (strain Sg) protein is 2-C-methyl-D-erythritol 2,4-cyclodiphosphate synthase.